Consider the following 128-residue polypeptide: Large ribosomal subunit protein bL19 (128 aa).

It belongs to the bacterial ribosomal protein bL19 family.

This protein is located at the 30S-50S ribosomal subunit interface and may play a role in the structure and function of the aminoacyl-tRNA binding site. The chain is Large ribosomal subunit protein bL19 from Mesoplasma florum (strain ATCC 33453 / NBRC 100688 / NCTC 11704 / L1) (Acholeplasma florum).